A 627-amino-acid polypeptide reads, in one-letter code: Polyadenylate-binding protein, cytoplasmic and nuclear (627 aa).

Positions 1–11 (MSAADANQVQE) are enriched in polar residues. Residues 1–46 (MSAADANQVQESLEKLNLDSAPVASTEETEQTASGETEEAADSAQV) are disordered. RRM domains lie at 51–129 (ASLY…WSQR), 139–216 (GNIF…KHIS), 232–309 (TNVY…RAQK), and 335–412 (VNLF…LAQR). The span at 511 to 535 (DFNNGANGGRQQRGYYPNRNQNQKG) shows a compositional bias: low complexity. A disordered region spans residues 511–537 (DFNNGANGGRQQRGYYPNRNQNQKGRQ). The 82-residue stretch at 537-618 (QQKDLAAIIA…ALTAFEEYKK (82 aa)) folds into the PABC domain.

It belongs to the polyadenylate-binding protein type-1 family.

Its subcellular location is the cytoplasm. It is found in the nucleus. In terms of biological role, binds the poly(A) tail of mRNA. Appears to be an important mediator of the multiple roles of the poly(A) tail in mRNA biogenesis, stability and translation. In the nucleus, involved in both mRNA cleavage and polyadenylation. Is also required for efficient mRNA export to the cytoplasm. Acts in concert with a poly(A)-specific nuclease (PAN) to affect poly(A) tail shortening, which may occur concomitantly with either nucleocytoplasmic mRNA transport or translational initiation. In the cytoplasm, stimulates translation initiation and regulates mRNA decay through translation termination-coupled poly(A) shortening, probably mediated by PAN. The protein is Polyadenylate-binding protein, cytoplasmic and nuclear (PAB1) of Debaryomyces hansenii (strain ATCC 36239 / CBS 767 / BCRC 21394 / JCM 1990 / NBRC 0083 / IGC 2968) (Yeast).